The following is a 299-amino-acid chain: Protease HtpX homolog (299 aa).

2 helical membrane-spanning segments follow: residues 15-35 (ILLLVFFLLLALVGYAVGYLF) and 39-59 (GLGGLVIALIIGFIYALSMIF). Zn(2+) is bound at residue His-143. Residue Glu-144 is part of the active site. His-147 lines the Zn(2+) pocket. 2 helical membrane-spanning segments follow: residues 158-178 (IAVALASAITMLSGMAGRMMW) and 198-218 (IIMLVVSLLAIVLAPLAATLV). A Zn(2+)-binding site is contributed by Glu-227.

Belongs to the peptidase M48B family. The cofactor is Zn(2+).

It localises to the cell membrane. The protein is Protease HtpX homolog of Streptococcus pneumoniae (strain P1031).